The primary structure comprises 236 residues: MTKRYWNIDLEEMMRAGVHFGHGTRKWNPRMAPYISAKRKGIHIINLTRTARFLSEACDLVFDAASRGKQFLIVGTKNKAADLVSRAAIRARCHYVNKKWLGGMLTNWSTTEKRLHKFRDLRTEQKTEGLNRLPKRDAAVLKRQFSHLETYLGGIKYMTGLPDIVIIIDQQEEYTALRECITLGIPTISLIDTNCNPDLADISIPANDDAIASIRFILNKLVFAICEGRSSYIQNS.

This sequence belongs to the universal ribosomal protein uS2 family.

Its subcellular location is the plastid. It is found in the chloroplast. The chain is Small ribosomal subunit protein uS2c (rps2) from Aethionema grandiflorum (Persian stone-cress).